Reading from the N-terminus, the 530-residue chain is Protein transport protein SEC9 (530 aa).

The interval 1–274 is disordered; that stretch reads MGIKKMFQKK…QPANDYNLDL (274 aa). Basic and acidic residues predominate over residues 8–22; sequence QKKEPTEQEIREELS. Low complexity-rich tracts occupy residues 61–100 and 122–141; these read NPYA…NNGG and GSSP…SSNP. Positions 142–160 are enriched in polar residues; that stretch reads YGNNNGSRSSQNTSSPYAK. Positions 161 to 202 are enriched in low complexity; that stretch reads STNNSSYSNSPYSGSTVNNGNRGGHSNNSNSSAGGNPYAAGG. 2 stretches are compositionally biased toward polar residues: residues 203 to 228 and 258 to 268; these read RSSQ…RQTQ and RNQQSSQQPAN. T-SNARE coiled-coil homology domains follow at residues 313-375 and 467-529; these read KFVK…VKEL and DDME…LNNI.

The protein belongs to the SNAP-25 family.

It is found in the membrane. In terms of biological role, late secretory t-SNARE protein required for secretion and proper cytokinesis. Plays an important role in the secretion of virulence-associated extracellular enzymes and vesicle-mediated polarized hyphal growth. The sequence is that of Protein transport protein SEC9 (SEC9) from Candida albicans (strain SC5314 / ATCC MYA-2876) (Yeast).